The primary structure comprises 283 residues: Polyamine aminopropyltransferase (283 aa).

Residues 2-237 enclose the PABS domain; it reads ELWYTEEHTD…GHWLFGFASK (236 aa). Position 31 (Gln31) interacts with S-methyl-5'-thioadenosine. Spermidine is bound by residues His62 and Asp86. Residues Glu106 and 137–138 contribute to the S-methyl-5'-thioadenosine site; that span reads DG. The active-site Proton acceptor is Asp155. 155–158 contributes to the spermidine binding site; that stretch reads DSTD. S-methyl-5'-thioadenosine is bound at residue Pro162.

This sequence belongs to the spermidine/spermine synthase family. As to quaternary structure, homodimer or homotetramer.

The protein resides in the cytoplasm. The catalysed reaction is S-adenosyl 3-(methylsulfanyl)propylamine + putrescine = S-methyl-5'-thioadenosine + spermidine + H(+). The protein operates within amine and polyamine biosynthesis; spermidine biosynthesis; spermidine from putrescine: step 1/1. Catalyzes the irreversible transfer of a propylamine group from the amino donor S-adenosylmethioninamine (decarboxy-AdoMet) to putrescine (1,4-diaminobutane) to yield spermidine. The protein is Polyamine aminopropyltransferase of Clostridium perfringens (strain SM101 / Type A).